The primary structure comprises 158 residues: MSETVVESFTLDHTKVKAPYVRVIETQAGPNGGSITNYDLRLTQPNETSIETGGLHTLEHLFAGLVRDEIDGIIDMSPFGCRTGFHVISWVNYDSETLAKVFKKVLEKIVSDEVTEVPAAEIESCGNYKDHSLHSAKEWAKIILAQGISSDAFERKIV.

Residues His-56, His-60, and Cys-125 each contribute to the Fe cation site.

This sequence belongs to the LuxS family. As to quaternary structure, homodimer. Requires Fe cation as cofactor.

The enzyme catalyses S-(5-deoxy-D-ribos-5-yl)-L-homocysteine = (S)-4,5-dihydroxypentane-2,3-dione + L-homocysteine. Its function is as follows. Involved in the synthesis of autoinducer 2 (AI-2) which is secreted by bacteria and is used to communicate both the cell density and the metabolic potential of the environment. The regulation of gene expression in response to changes in cell density is called quorum sensing. Catalyzes the transformation of S-ribosylhomocysteine (RHC) to homocysteine (HC) and 4,5-dihydroxy-2,3-pentadione (DPD). This is S-ribosylhomocysteine lyase from Leuconostoc mesenteroides subsp. mesenteroides (strain ATCC 8293 / DSM 20343 / BCRC 11652 / CCM 1803 / JCM 6124 / NCDO 523 / NBRC 100496 / NCIMB 8023 / NCTC 12954 / NRRL B-1118 / 37Y).